The chain runs to 234 residues: Triosephosphate isomerase (234 aa).

8–10 contacts substrate; that stretch reads NFK. The Electrophile role is filled by His-90. Glu-159 (proton acceptor) is an active-site residue. Substrate is bound by residues Gly-165 and Ser-197.

This sequence belongs to the triosephosphate isomerase family. As to quaternary structure, homodimer.

It localises to the cytoplasm. The catalysed reaction is D-glyceraldehyde 3-phosphate = dihydroxyacetone phosphate. Its pathway is carbohydrate biosynthesis; gluconeogenesis. It participates in carbohydrate degradation; glycolysis; D-glyceraldehyde 3-phosphate from glycerone phosphate: step 1/1. Involved in the gluconeogenesis. Catalyzes stereospecifically the conversion of dihydroxyacetone phosphate (DHAP) to D-glyceraldehyde-3-phosphate (G3P). In Helicobacter pylori (strain Shi470), this protein is Triosephosphate isomerase.